The sequence spans 310 residues: 4-hydroxy-3-methylbut-2-enyl diphosphate reductase (310 aa).

Residue Cys-13 participates in [4Fe-4S] cluster binding. The (2E)-4-hydroxy-3-methylbut-2-enyl diphosphate site is built by His-42 and His-75. Positions 42 and 75 each coordinate dimethylallyl diphosphate. Residues His-42 and His-75 each contribute to the isopentenyl diphosphate site. Position 97 (Cys-97) interacts with [4Fe-4S] cluster. (2E)-4-hydroxy-3-methylbut-2-enyl diphosphate is bound at residue His-125. His-125 provides a ligand contact to dimethylallyl diphosphate. His-125 lines the isopentenyl diphosphate pocket. The active-site Proton donor is Glu-127. Thr-165 provides a ligand contact to (2E)-4-hydroxy-3-methylbut-2-enyl diphosphate. A [4Fe-4S] cluster-binding site is contributed by Cys-195. Residues Ser-223, Ser-224, Asn-225, and Ser-267 each coordinate (2E)-4-hydroxy-3-methylbut-2-enyl diphosphate. Residues Ser-223, Ser-224, Asn-225, and Ser-267 each contribute to the dimethylallyl diphosphate site. Ser-223, Ser-224, Asn-225, and Ser-267 together coordinate isopentenyl diphosphate.

This sequence belongs to the IspH family. It depends on [4Fe-4S] cluster as a cofactor.

It carries out the reaction isopentenyl diphosphate + 2 oxidized [2Fe-2S]-[ferredoxin] + H2O = (2E)-4-hydroxy-3-methylbut-2-enyl diphosphate + 2 reduced [2Fe-2S]-[ferredoxin] + 2 H(+). The enzyme catalyses dimethylallyl diphosphate + 2 oxidized [2Fe-2S]-[ferredoxin] + H2O = (2E)-4-hydroxy-3-methylbut-2-enyl diphosphate + 2 reduced [2Fe-2S]-[ferredoxin] + 2 H(+). It participates in isoprenoid biosynthesis; dimethylallyl diphosphate biosynthesis; dimethylallyl diphosphate from (2E)-4-hydroxy-3-methylbutenyl diphosphate: step 1/1. The protein operates within isoprenoid biosynthesis; isopentenyl diphosphate biosynthesis via DXP pathway; isopentenyl diphosphate from 1-deoxy-D-xylulose 5-phosphate: step 6/6. Its function is as follows. Catalyzes the conversion of 1-hydroxy-2-methyl-2-(E)-butenyl 4-diphosphate (HMBPP) into a mixture of isopentenyl diphosphate (IPP) and dimethylallyl diphosphate (DMAPP). Acts in the terminal step of the DOXP/MEP pathway for isoprenoid precursor biosynthesis. This chain is 4-hydroxy-3-methylbut-2-enyl diphosphate reductase, found in Chlamydia pneumoniae (Chlamydophila pneumoniae).